Reading from the N-terminus, the 152-residue chain is Transcriptional regulator MraZ (152 aa).

2 SpoVT-AbrB domains span residues 5 to 52 (ASAV…PLNQ) and 81 to 124 (ATEC…SESE).

Belongs to the MraZ family. In terms of assembly, forms oligomers.

The protein localises to the cytoplasm. It localises to the nucleoid. This chain is Transcriptional regulator MraZ, found in Histophilus somni (strain 129Pt) (Haemophilus somnus).